The following is a 338-amino-acid chain: Uroporphyrinogen decarboxylase (338 aa).

Residues Arg-25–Arg-29, Phe-44, Asp-75, Tyr-146, Ser-201, and His-314 each bind substrate.

Belongs to the uroporphyrinogen decarboxylase family. Homodimer.

Its subcellular location is the cytoplasm. The enzyme catalyses uroporphyrinogen III + 4 H(+) = coproporphyrinogen III + 4 CO2. It participates in porphyrin-containing compound metabolism; protoporphyrin-IX biosynthesis; coproporphyrinogen-III from 5-aminolevulinate: step 4/4. Its function is as follows. Catalyzes the decarboxylation of four acetate groups of uroporphyrinogen-III to yield coproporphyrinogen-III. In Aquifex aeolicus (strain VF5), this protein is Uroporphyrinogen decarboxylase.